The sequence spans 363 residues: AA9 family lytic polysaccharide monooxygenase I (363 aa).

An N-terminal signal peptide occupies residues 1-19 (MSLFKFAAFVLGTAGSVAG). Cu(2+) contacts are provided by H20 and H105. Disulfide bonds link C75–C197 and C116–C120. Residues H183 and Q192 each contribute to the O2 site. Residue Y194 coordinates Cu(2+). Over residues 248–257 (GSDSNTATSG) the composition is skewed to polar residues. 2 disordered regions span residues 248 to 270 (GSDSNTATSGASPPSTNFSPTTT) and 298 to 363 (SVSY…RTQS). Positions 258–270 (ASPPSTNFSPTTT) are enriched in low complexity. Over residues 298 to 307 (SVSYSQTPWP) the composition is skewed to polar residues. Residues 308–329 (SSTATEATSASSSAGGSNNGHT) are compositionally biased toward low complexity. Over residues 342-354 (TGKKRSRLNRRRM) the composition is skewed to basic residues.

It belongs to the polysaccharide monooxygenase AA9 family. Cu(2+) serves as cofactor.

It is found in the secreted. It carries out the reaction [(1-&gt;4)-beta-D-glucosyl]n+m + reduced acceptor + O2 = 4-dehydro-beta-D-glucosyl-[(1-&gt;4)-beta-D-glucosyl]n-1 + [(1-&gt;4)-beta-D-glucosyl]m + acceptor + H2O.. Lytic polysaccharide monooxygenase (LPMO) that depolymerizes crystalline and amorphous polysaccharides via the oxidation of scissile alpha- or beta-(1-4)-glycosidic bonds, yielding C1 or C4 oxidation products. Catalysis by LPMOs requires the reduction of the active-site copper from Cu(II) to Cu(I) by a reducing agent and H(2)O(2) or O(2) as a cosubstrate. The polypeptide is AA9 family lytic polysaccharide monooxygenase I (Emericella nidulans (strain FGSC A4 / ATCC 38163 / CBS 112.46 / NRRL 194 / M139) (Aspergillus nidulans)).